A 346-amino-acid chain; its full sequence is MAQAPDREKALELAMAQIEKSYGKGSVMRLGDEVRQPISIIPTGSIALDVALGIGGLPRGRVIEIYGPESSGKTTVALHAVANAQAAGGVAAFIDAEHALDPEYAKKLGVDTDSLLVSQPDTGEQALEIVDMLIRSGALDIVVIDSVAALVPRAELEGEMGDSHVGLQARLMSQALRKMTGALNNSGTTAIFINQLRDKIGVMFGSPETTTGGKALKFYASVRMDVRRIETLKDGTNAVGNRTRVKIVKNKVSPPFKQAEFDILYGRGISREGSLIDMGVDQGFIRKSGAWFTYEGEQLGQGKENARNFLLENGGVANEIEKKIKEKLGIGAVVTDDGVLPAPVDF.

67–74 is a binding site for ATP; that stretch reads GPESSGKT.

Belongs to the RecA family.

It localises to the cytoplasm. Can catalyze the hydrolysis of ATP in the presence of single-stranded DNA, the ATP-dependent uptake of single-stranded DNA by duplex DNA, and the ATP-dependent hybridization of homologous single-stranded DNAs. It interacts with LexA causing its activation and leading to its autocatalytic cleavage. In Mycobacterium ulcerans (strain Agy99), this protein is Protein RecA.